Reading from the N-terminus, the 170-residue chain is NADH-quinone oxidoreductase subunit B (170 aa).

[4Fe-4S] cluster contacts are provided by cysteine 37, cysteine 38, cysteine 102, and cysteine 131.

Belongs to the complex I 20 kDa subunit family. NDH-1 is composed of 14 different subunits. Subunits NuoB, C, D, E, F, and G constitute the peripheral sector of the complex. Requires [4Fe-4S] cluster as cofactor.

The protein resides in the cell inner membrane. The enzyme catalyses a quinone + NADH + 5 H(+)(in) = a quinol + NAD(+) + 4 H(+)(out). In terms of biological role, NDH-1 shuttles electrons from NADH, via FMN and iron-sulfur (Fe-S) centers, to quinones in the respiratory chain. The immediate electron acceptor for the enzyme in this species is believed to be ubiquinone. Couples the redox reaction to proton translocation (for every two electrons transferred, four hydrogen ions are translocated across the cytoplasmic membrane), and thus conserves the redox energy in a proton gradient. This chain is NADH-quinone oxidoreductase subunit B, found in Geobacter sp. (strain M21).